A 361-amino-acid chain; its full sequence is Ribosomal RNA large subunit methyltransferase M (361 aa).

Residues serine 193, cysteine 226 to glycine 229, aspartate 245, aspartate 265, and aspartate 283 contribute to the S-adenosyl-L-methionine site. Lysine 312 (proton acceptor) is an active-site residue.

It belongs to the class I-like SAM-binding methyltransferase superfamily. RNA methyltransferase RlmE family. RlmM subfamily. Monomer.

It is found in the cytoplasm. The catalysed reaction is cytidine(2498) in 23S rRNA + S-adenosyl-L-methionine = 2'-O-methylcytidine(2498) in 23S rRNA + S-adenosyl-L-homocysteine + H(+). In terms of biological role, catalyzes the 2'-O-methylation at nucleotide C2498 in 23S rRNA. This Histophilus somni (strain 129Pt) (Haemophilus somnus) protein is Ribosomal RNA large subunit methyltransferase M.